Here is a 399-residue protein sequence, read N- to C-terminus: Succinate--CoA ligase [ADP-forming] subunit beta (399 aa).

Residues 9-254 form the ATP-grasp domain; that stretch reads KELLAKFGVA…ETEEDPAEIE (246 aa). ATP contacts are provided by residues lysine 46, 53-55, alanine 112, and glutamate 117; that span reads GRG. 2 residues coordinate Mg(2+): asparagine 209 and aspartate 223. Substrate is bound by residues asparagine 274 and 331–333; that span reads GIM.

Belongs to the succinate/malate CoA ligase beta subunit family. In terms of assembly, heterotetramer of two alpha and two beta subunits. The cofactor is Mg(2+).

It catalyses the reaction succinate + ATP + CoA = succinyl-CoA + ADP + phosphate. The enzyme catalyses GTP + succinate + CoA = succinyl-CoA + GDP + phosphate. It functions in the pathway carbohydrate metabolism; tricarboxylic acid cycle; succinate from succinyl-CoA (ligase route): step 1/1. Its function is as follows. Succinyl-CoA synthetase functions in the citric acid cycle (TCA), coupling the hydrolysis of succinyl-CoA to the synthesis of either ATP or GTP and thus represents the only step of substrate-level phosphorylation in the TCA. The beta subunit provides nucleotide specificity of the enzyme and binds the substrate succinate, while the binding sites for coenzyme A and phosphate are found in the alpha subunit. The sequence is that of Succinate--CoA ligase [ADP-forming] subunit beta from Rhizorhabdus wittichii (strain DSM 6014 / CCUG 31198 / JCM 15750 / NBRC 105917 / EY 4224 / RW1) (Sphingomonas wittichii).